A 95-amino-acid chain; its full sequence is MTLERSDVEKIAHLASLGLNEDDLPQTTAALNSILGLVDQMQAVNTDGIEPLAHPLEASQRLRADVVTESNNREAYQSIAPAVENGLYLVPKVID.

Belongs to the GatC family. Heterotrimer of A, B and C subunits.

The enzyme catalyses L-glutamyl-tRNA(Gln) + L-glutamine + ATP + H2O = L-glutaminyl-tRNA(Gln) + L-glutamate + ADP + phosphate + H(+). It carries out the reaction L-aspartyl-tRNA(Asn) + L-glutamine + ATP + H2O = L-asparaginyl-tRNA(Asn) + L-glutamate + ADP + phosphate + 2 H(+). Its function is as follows. Allows the formation of correctly charged Asn-tRNA(Asn) or Gln-tRNA(Gln) through the transamidation of misacylated Asp-tRNA(Asn) or Glu-tRNA(Gln) in organisms which lack either or both of asparaginyl-tRNA or glutaminyl-tRNA synthetases. The reaction takes place in the presence of glutamine and ATP through an activated phospho-Asp-tRNA(Asn) or phospho-Glu-tRNA(Gln). The polypeptide is Aspartyl/glutamyl-tRNA(Asn/Gln) amidotransferase subunit C (Pseudomonas fluorescens (strain SBW25)).